The primary structure comprises 675 residues: Methionine--tRNA ligase (675 aa).

The 'HIGH' region motif lies at 15–25 (PYANGSIHLGH). 4 residues coordinate Zn(2+): C146, C149, C159, and C162. The 'KMSKS' region motif lies at 332 to 336 (KMSKS). Residue K335 participates in ATP binding. The 103-residue stretch at 573–675 (DFAKVDMRIA…SGAQPGMQVK (103 aa)) folds into the tRNA-binding domain.

This sequence belongs to the class-I aminoacyl-tRNA synthetase family. MetG type 1 subfamily. In terms of assembly, homodimer. Requires Zn(2+) as cofactor.

Its subcellular location is the cytoplasm. It carries out the reaction tRNA(Met) + L-methionine + ATP = L-methionyl-tRNA(Met) + AMP + diphosphate. In terms of biological role, is required not only for elongation of protein synthesis but also for the initiation of all mRNA translation through initiator tRNA(fMet) aminoacylation. The sequence is that of Methionine--tRNA ligase from Yersinia pseudotuberculosis serotype O:1b (strain IP 31758).